Here is a 767-residue protein sequence, read N- to C-terminus: ABC transporter B family member 4 (767 aa).

Residues 81-104 (NYSSSSNSGNNNNNNYNNKNNNNN) form a disordered region. 5 helical membrane passes run 208–228 (IWLF…GLQI), 252–272 (AIFI…MISV), 324–344 (VSLG…LILI), 350–370 (LGMM…AGWL), and 429–449 (IGIF…LVYW). Residues 211 to 491 (FGFGIITAFF…LSILFTQIMS (281 aa)) enclose the ABC transmembrane type-1 domain. Residues 524–760 (IKFINVDFKY…KGLYYKLVQR (237 aa)) form the ABC transporter domain. ATP is bound at residue 559-566 (GSSGGGKS).

This sequence belongs to the ABC transporter superfamily. ABCB family. Multidrug resistance exporter (TC 3.A.1.201) subfamily.

Its subcellular location is the membrane. The polypeptide is ABC transporter B family member 4 (abcB4) (Dictyostelium discoideum (Social amoeba)).